Consider the following 146-residue polypeptide: Large ribosomal subunit protein uL16 (146 aa).

This sequence belongs to the universal ribosomal protein uL16 family. Part of the 50S ribosomal subunit.

Its function is as follows. Binds 23S rRNA and is also seen to make contacts with the A and possibly P site tRNAs. The chain is Large ribosomal subunit protein uL16 from Lactobacillus acidophilus (strain ATCC 700396 / NCK56 / N2 / NCFM).